Reading from the N-terminus, the 575-residue chain is Alpha-(1,6)-fucosyltransferase (575 aa).

Over 1–9 (MRPWTGSWR) the chain is Cytoplasmic. Residues 10-30 (WIMLILFAWGTLLFYIGGHLV) form a helical; Signal-anchor for type II membrane protein membrane-spanning segment. Residues 31–575 (RDNDHSDHSS…KYPTYPEADK (545 aa)) are Lumenal-facing. 3 cysteine pairs are disulfide-bonded: Cys204–Cys266, Cys212–Cys230, and Cys218–Cys222. The 288-residue stretch at 206–493 (KAKKLVCNIN…PDASANFRSL (288 aa)) folds into the GT23 domain. Ser278 is subject to Phosphoserine. Positions 299-305 (PRPPYLP) match the SH3-binding motif. Residues 365–366 (RR) form an important for donor substrate binding region. Cys465 and Cys472 are disulfide-bonded. One can recognise an SH3 domain in the interval 502-563 (PNAHNQIAIY…PSYKVREKIE (62 aa)).

It belongs to the glycosyltransferase 23 family. In terms of processing, tyrosine phosphorylated by PKDCC/VLK. In terms of tissue distribution, highest expression in brain.

The protein localises to the golgi apparatus. It is found in the golgi stack membrane. It catalyses the reaction N(4)-{beta-D-GlcNAc-(1-&gt;2)-alpha-D-Man-(1-&gt;3)-[beta-D-GlcNAc-(1-&gt;2)-alpha-D-Man-(1-&gt;6)]-beta-D-Man-(1-&gt;4)-beta-D-GlcNAc-(1-&gt;4)-beta-D-GlcNAc}-L-asparaginyl-[protein] + GDP-beta-L-fucose = an N(4)-{beta-D-GlcNAc-(1-&gt;2)-alpha-D-Man-(1-&gt;3)-[beta-D-GlcNAc-(1-&gt;2)-alpha-D-Man-(1-&gt;6)]-beta-D-Man-(1-&gt;4)-beta-D-GlcNAc-(1-&gt;4)-[alpha-L-Fuc-(1-&gt;6)]-beta-D-GlcNAc}-L-asparaginyl-[protein] + GDP + H(+). It participates in protein modification; protein glycosylation. Its function is as follows. Catalyzes the addition of fucose in alpha 1-6 linkage to the first GlcNAc residue, next to the peptide chains in N-glycans. The chain is Alpha-(1,6)-fucosyltransferase (FUT8) from Sus scrofa (Pig).